Consider the following 88-residue polypeptide: Small ribosomal subunit protein bS20 (88 aa).

A disordered region spans residues 1–25; the sequence is MANSAQARKRARQAVAQNAHNSSLR.

It belongs to the bacterial ribosomal protein bS20 family.

In terms of biological role, binds directly to 16S ribosomal RNA. In Cupriavidus pinatubonensis (strain JMP 134 / LMG 1197) (Cupriavidus necator (strain JMP 134)), this protein is Small ribosomal subunit protein bS20.